A 538-amino-acid chain; its full sequence is Chaperonin GroEL (538 aa).

Residues 29 to 32 (TLGP), 86 to 90 (DGTTT), G413, 477 to 479 (NAA), and D493 contribute to the ATP site.

It belongs to the chaperonin (HSP60) family. As to quaternary structure, forms a cylinder of 14 subunits composed of two heptameric rings stacked back-to-back. Interacts with the co-chaperonin GroES.

The protein resides in the cytoplasm. The enzyme catalyses ATP + H2O + a folded polypeptide = ADP + phosphate + an unfolded polypeptide.. Functionally, together with its co-chaperonin GroES, plays an essential role in assisting protein folding. The GroEL-GroES system forms a nano-cage that allows encapsulation of the non-native substrate proteins and provides a physical environment optimized to promote and accelerate protein folding. This chain is Chaperonin GroEL, found in Bifidobacterium adolescentis (strain ATCC 15703 / DSM 20083 / NCTC 11814 / E194a).